The following is an 85-amino-acid chain: Small ribosomal subunit protein uS17 (85 aa).

This sequence belongs to the universal ribosomal protein uS17 family. As to quaternary structure, part of the 30S ribosomal subunit.

Functionally, one of the primary rRNA binding proteins, it binds specifically to the 5'-end of 16S ribosomal RNA. The polypeptide is Small ribosomal subunit protein uS17 (Geobacter metallireducens (strain ATCC 53774 / DSM 7210 / GS-15)).